The following is a 436-amino-acid chain: UDP-N-acetylmuramate--L-alanine ligase (436 aa).

108 to 114 (GAHGKTS) lines the ATP pocket.

The protein belongs to the MurCDEF family.

The protein resides in the cytoplasm. It carries out the reaction UDP-N-acetyl-alpha-D-muramate + L-alanine + ATP = UDP-N-acetyl-alpha-D-muramoyl-L-alanine + ADP + phosphate + H(+). It functions in the pathway cell wall biogenesis; peptidoglycan biosynthesis. Functionally, cell wall formation. This Bacillus cereus (strain ZK / E33L) protein is UDP-N-acetylmuramate--L-alanine ligase.